A 697-amino-acid chain; its full sequence is Elongation factor G (697 aa).

Residues 8–283 (EHIRNIGICA…AVVDFLPSPT (276 aa)) form the tr-type G domain. GTP contacts are provided by residues 17-24 (AHIDAGKT), 81-85 (DTPGH), and 135-138 (NKMD).

Belongs to the TRAFAC class translation factor GTPase superfamily. Classic translation factor GTPase family. EF-G/EF-2 subfamily.

The protein localises to the cytoplasm. Functionally, catalyzes the GTP-dependent ribosomal translocation step during translation elongation. During this step, the ribosome changes from the pre-translocational (PRE) to the post-translocational (POST) state as the newly formed A-site-bound peptidyl-tRNA and P-site-bound deacylated tRNA move to the P and E sites, respectively. Catalyzes the coordinated movement of the two tRNA molecules, the mRNA and conformational changes in the ribosome. The protein is Elongation factor G of Rickettsia massiliae (strain Mtu5).